A 171-amino-acid chain; its full sequence is 2-C-methyl-D-erythritol 2,4-cyclodiphosphate synthase (171 aa).

Asp8 and His10 together coordinate a divalent metal cation. 4-CDP-2-C-methyl-D-erythritol 2-phosphate-binding positions include 8–10 and 34–35; these read DVH and HS. A divalent metal cation is bound at residue His42. Residues 56 to 58, 61 to 65, 132 to 135, Phe139, and Arg142 contribute to the 4-CDP-2-C-methyl-D-erythritol 2-phosphate site; these read DIG, FPDTD, and TTTE.

The protein belongs to the IspF family. As to quaternary structure, homotrimer. It depends on a divalent metal cation as a cofactor.

The enzyme catalyses 4-CDP-2-C-methyl-D-erythritol 2-phosphate = 2-C-methyl-D-erythritol 2,4-cyclic diphosphate + CMP. It functions in the pathway isoprenoid biosynthesis; isopentenyl diphosphate biosynthesis via DXP pathway; isopentenyl diphosphate from 1-deoxy-D-xylulose 5-phosphate: step 4/6. Functionally, involved in the biosynthesis of isopentenyl diphosphate (IPP) and dimethylallyl diphosphate (DMAPP), two major building blocks of isoprenoid compounds. Catalyzes the conversion of 4-diphosphocytidyl-2-C-methyl-D-erythritol 2-phosphate (CDP-ME2P) to 2-C-methyl-D-erythritol 2,4-cyclodiphosphate (ME-CPP) with a corresponding release of cytidine 5-monophosphate (CMP). This is 2-C-methyl-D-erythritol 2,4-cyclodiphosphate synthase from Geotalea daltonii (strain DSM 22248 / JCM 15807 / FRC-32) (Geobacter daltonii).